A 394-amino-acid polypeptide reads, in one-letter code: 1-deoxy-D-xylulose 5-phosphate reductoisomerase (394 aa).

7 residues coordinate NADPH: Thr12, Gly13, Ser14, Ile15, Lys39, Gln40, and Asn126. Position 127 (Lys127) interacts with 1-deoxy-D-xylulose 5-phosphate. Glu128 contacts NADPH. Asp152 contacts Mn(2+). Residues Ser153, Glu154, Ser183, and His206 each contribute to the 1-deoxy-D-xylulose 5-phosphate site. Glu154 lines the Mn(2+) pocket. Residue Gly212 coordinates NADPH. 1-deoxy-D-xylulose 5-phosphate-binding residues include Ser219, Asn224, Lys225, and Glu228. Residue Glu228 coordinates Mn(2+).

The protein belongs to the DXR family. The cofactor is Mg(2+). Requires Mn(2+) as cofactor.

The catalysed reaction is 2-C-methyl-D-erythritol 4-phosphate + NADP(+) = 1-deoxy-D-xylulose 5-phosphate + NADPH + H(+). It functions in the pathway isoprenoid biosynthesis; isopentenyl diphosphate biosynthesis via DXP pathway; isopentenyl diphosphate from 1-deoxy-D-xylulose 5-phosphate: step 1/6. Its function is as follows. Catalyzes the NADPH-dependent rearrangement and reduction of 1-deoxy-D-xylulose-5-phosphate (DXP) to 2-C-methyl-D-erythritol 4-phosphate (MEP). In Neisseria meningitidis serogroup A / serotype 4A (strain DSM 15465 / Z2491), this protein is 1-deoxy-D-xylulose 5-phosphate reductoisomerase.